The following is a 142-amino-acid chain: Large ribosomal subunit protein uL13 (142 aa).

It belongs to the universal ribosomal protein uL13 family. As to quaternary structure, part of the 50S ribosomal subunit.

Its function is as follows. This protein is one of the early assembly proteins of the 50S ribosomal subunit, although it is not seen to bind rRNA by itself. It is important during the early stages of 50S assembly. The polypeptide is Large ribosomal subunit protein uL13 (Delftia acidovorans (strain DSM 14801 / SPH-1)).